The following is a 2605-amino-acid chain: MLGHRDFTTLPLSRREFLLFGPLALSFDQAAFEHLRKTIVNSEEHRWALEVLGSLPQYYATIVNAFPGINGRNEVQLEDLKGALHSGKPLATSFPLPNTLLIPLVMVLHLTEYSRFLQEISEELESGIDLFDASRHNKETVGFCTGLLSAMAVSSAGSREDFRKYAAVAVRLGLLVGVVVDSHDISSAQGPSKSISASWNSAQKREDARRIMDEFPQAYISVYYDEDRATITAPASEISDLHRRLRASGIVTAEIGLNGCFHADCYLDQLDPIIQFCDSQPDFQLPDASKVVIPTRSNATGELIRDGALHQHALRSILVEPPQWFESFTAVRDACAEDEGAIIFSFGPERCVPPSLLRVLSQKVVTVEDLDVLKRYQYSYSENDIAVVGMSCKVAGANNLEEFWDLLCTGKSQHREVPKERFSFETVFRDVDSKRKWFGNFIDGHDQFDHKFFKKSPRESATMDPQQRHLLQIAYQAVEQSGYFHSANPDRQIGCYMGVCACDYENNIACHAPNAFSATGNLQGFIAGKVSHFFGWTGPGLTIDTACSSSAVAVHQACKAIITGECTAALAGGTHVMTNPLWFQNLAGASFLSTTGQCKPFDAKADGYCRGEGIATVFLKKLSAAVADGDQILGVITATAVQQNQNCTPIFVPNVPSLSDLFRVVVKQSRLQPSDVTVVEAHGTGTAVGDPAEYDSIRSVLGGSSREKTLALSSVKGLVGHIECTSGIVSLIKVLLMLQKRMIPPQASFTTINPAIKATPADKINIPTTVKTWDAEFCAALINNYGASGSNASIVVTQPPVGTVKPSAETSGLKYPFRFCGMDEQSLRRYSKIFRQFLNRKSYSAQDLSLRNISFNVNRQSNRQLDRTLLFSVKTLEELEQKLVTFENDNDSITSLALPKSKPVVLCFGGQVSTFVGLDRTVYERVAILRKHLHTVDAVARSIGLKSIFPRIFETTPVSDTVHLQIMLFASQYACARSWIDSGIQPVAVVGHSFGELTSLCVSQSLSLEDAVKMIAARATLIRDAWGPEKGAMLAVEADLEDVQKLLAESSAGCQDVQPATIACYNGPRSFTLAGAVAAIDAVAEALATPAFSSMKNKRLNVTNAFHCALVDPLLDRLEESARELTFRAPVIPVQRATEYQTEELPTSRFVADHIRSPVFFNHAIHRLADKYPSCVFLEAGSNSTVTNMASRALGNPSSSHFQAINITSHNGWNNLVDATMNMWKSGLGVHFWAHQPSQTKEYALLLLPPYQFEPSRHWIELKNPPKLTAAPAIEEVKKEEAKVPNTLLTFVGYQDSERQQARFRVNTMIPKYDKLIRGHIIAQTAPICPATVQLDLVIESIRSIRPELASTEHEPQIHAVENLAPICVNPLRAVWVEVTADDVAQGTSWNFQVYSDDLQNGFSKTIHTTGRVIFRSISDVSLKYEFARFERHFRHQTCVELMRGGEVDEVLQNRNIYKMFAEIVDYGEDYRGLQKLVSKGNQSAGYVVKKYNPESWLDGHLADSFCQVGGIYVNCMTDRVPNDMFIANGIEQWMRSPKMRQQDPRPESYHVLATHHRPSDKAFLTDVFAFDSTTGVLIEVILGISYVKIPKASMSKLLSRLTVNDSASCPTNMPLLSKSASVNLFDAPENLSTPSLSVAPTQQSAPALSLSKVKKVKNDGPDKGQLTQRIKSILAELSGLEIAEIKDDSELADLGIDSLMGMEMAHEIEKAFTISLPESDLMEVVDVPSLIKCVRKAMSGDADSAEYTTEQSTSEAADSDDKSTNYTTPSTPGEEALDMDKSMREFLGKEGTELNLPFETVMKAFNETKNMTDDRIAEYQQTRYVESVLPMQSQMCVSLVLEAFDQLNMRIRTAPAGEKFTRISHPKEHTRLVDYLYKMLEDASLINIDGEVITRTAIQVPRPSKEIFDELVSQHPDQNAADKLTFYTGSHLAEVLKGETDGIKLIFGTQDGRELVSKLYRDWPLNRLFYRQMEDFLERLTSKLDISQGVIKILEMGAGTGGTTKWLVPLLAKLNIPVEYTFTDIAPSFVAAARKKFSKQYPFMKFRTHDIEKAPADDLIGSQHVIIASNAVHATHSLSESGKNIRKALRPDGVLLMLEMTGTLHWVDIIFGLFEGWWYFDDGRTHAVTHESRWAKDLQAVGYGHVDWTDGVRPENKLEKLIIAFASGGRYERLHIPRPLESASADCAARQAVVDRYVQEMTAGFGAATGVSPSAPLAHQEPKGCCVLVTGATGSLGCHLLAALTSLPTIASVVCLNRRSRQDPLERQHRSLLEKKIFLSEETAARVRVIETDMSKPQLGLLEEEYNYLLNSVTHIVHNAWLMNAKLPLRRFEPQLQIMRNLLDLAYGISLQRPMEKVSFQFISSIATVGHWPIWTGKSSVPEERMAIESVLPTGYGDAKYICERMIDETLHKYPDRFRAMVVRPGQVAGSSTSGYWNTMEHFSFLVKSSQTLNALPDFDGVLSWTPVDVVASTLVDLLLLPEDKTPYSIYHIDNPVRQPWKEMNVVLADALHIPRSNIIPFEKWIQRVKDYPRQVEGAEGDNPAILLVDFLDNNFIRMSCGGLLLETKKSREHSKTLANLGPVSAETARLFIKSWIDMGFLSP.

The interval 97–243 (PNTLLIPLVM…PASEISDLHR (147 aa)) is N-terminal acylcarrier protein transacylase domain (SAT). Cysteine 144 functions as the Nucleophile; for transacylase activity in the catalytic mechanism. The active-site Proton donor/acceptor; for transacylase activity is histidine 262. The Ketosynthase family 3 (KS3) domain maps to 382 to 798 (ENDIAVVGMS…GSNASIVVTQ (417 aa)). Residues cysteine 547, histidine 682, and histidine 721 each act as for beta-ketoacyl synthase activity in the active site. The interval 908–1195 (FGGQVSTFVG…VTNMASRALG (288 aa)) is malonyl-CoA:ACP transacylase (MAT) domain. Residues 1285-1420 (PNTLLTFVGY…GRVIFRSISD (136 aa)) form an N-terminal hotdog fold region. The PKS/mFAS DH domain occupies 1285–1596 (PNTLLTFVGY…YVKIPKASMS (312 aa)). Positions 1316-1594 (LIRGHIIAQT…ISYVKIPKAS (279 aa)) are product template (PT) domain. Histidine 1320 functions as the Proton acceptor; for dehydratase activity in the catalytic mechanism. The tract at residues 1447 to 1596 (EVDEVLQNRN…YVKIPKASMS (150 aa)) is C-terminal hotdog fold. Catalysis depends on aspartate 1504, which acts as the Proton donor; for dehydratase activity. The Carrier domain occupies 1665-1739 (GQLTQRIKSI…SLIKCVRKAM (75 aa)). At serine 1699 the chain carries O-(pantetheine 4'-phosphoryl)serine. The disordered stretch occupies residues 1742-1780 (DADSAEYTTEQSTSEAADSDDKSTNYTTPSTPGEEALDM). Positions 1747–1757 (EYTTEQSTSEA) are enriched in polar residues. Residues 1963–2151 (DWPLNRLFYR…VGYGHVDWTD (189 aa)) form a methyltransferase domain region. Residues 2230–2473 (VTGATGSLGC…LSWTPVDVVA (244 aa)) are NADPH-binding (R) domain.

The enzyme catalyses 4 malonyl-CoA + acetyl-CoA + AH2 + S-adenosyl-L-methionine + 3 H(+) = 2,4-dihydroxy-3-methyl-6-(2-oxopropyl)benzaldehyde + A + S-adenosyl-L-homocysteine + 4 CO2 + 5 CoA + H2O. It functions in the pathway secondary metabolite biosynthesis. Its function is as follows. Non-reducing polyketide synthase; part of the gene cluster that mediates the biosynthesis of the antibiotic 2,4-dihydroxy-3-methyl-6-(2-oxopropyl)benzaldehyde (DHMBA) and its derivatives. The direct non-reducing polyketide synthase dbaI product is 2,4-dihydroxy-3-methyl-6-(2-oxopropyl)benzaldehyde (DHMBA), produced by condensation of one acetyl-CoA starter unit with 4 malonyl-CoA units and one methylation step. The FAD-dependent monooxygenase dbaH is responsible for the synthesis of yellow pigments derived from the oxidation of DHMBA. The roles of dbaB, C, E and F have still to be determined. The chain is Non-reducing polyketide synthase dbaI from Emericella nidulans (strain FGSC A4 / ATCC 38163 / CBS 112.46 / NRRL 194 / M139) (Aspergillus nidulans).